The primary structure comprises 146 residues: Bradykinin-like neuropeptide (146 aa).

Positions 1-24 are cleaved as a signal peptide; sequence MTSSIYGFITLSVVALISQTTCRS. 2 propeptides span residues 25–80 and 92–146; these read LDLL…LMEA and LRSY…FRYG.

In terms of tissue distribution, neuron L5.

It localises to the secreted. In terms of biological role, may have important functions in renal physiology and in animal behavior, as does bradykinin. In Aplysia californica (California sea hare), this protein is Bradykinin-like neuropeptide (LUQ-1).